The primary structure comprises 138 residues: MIQQTLAIIKPDATKRHLIGEILSYMEKNGLAIKALKMLHLTKEQTEGFYAEHQGKDFFDPLVAFMISEPIVVAVLEGENAVENYRLLMGATKPEERKLGTIRKMFGLGYRENAVHGSDSETSAKREIAYFFTPSEIV.

The ATP site is built by lysine 10, phenylalanine 58, arginine 86, threonine 92, arginine 103, and asparagine 113. The Pros-phosphohistidine intermediate role is filled by histidine 116.

The protein belongs to the NDK family. In terms of assembly, homotetramer. It depends on Mg(2+) as a cofactor.

It localises to the cytoplasm. It carries out the reaction a 2'-deoxyribonucleoside 5'-diphosphate + ATP = a 2'-deoxyribonucleoside 5'-triphosphate + ADP. It catalyses the reaction a ribonucleoside 5'-diphosphate + ATP = a ribonucleoside 5'-triphosphate + ADP. In terms of biological role, major role in the synthesis of nucleoside triphosphates other than ATP. The ATP gamma phosphate is transferred to the NDP beta phosphate via a ping-pong mechanism, using a phosphorylated active-site intermediate. The chain is Nucleoside diphosphate kinase from Glaesserella parasuis serovar 5 (strain SH0165) (Haemophilus parasuis).